A 359-amino-acid chain; its full sequence is Cytoplasmic tRNA 2-thiolation protein 1 (359 aa).

Belongs to the TtcA family. CTU1/NCS6/ATPBD3 subfamily. As to quaternary structure, interacts with NCS2 and URM1. May act by forming a heterodimer with NCS2. Component of a large molecular weight complex of more than 250 kDa.

It localises to the cytoplasm. Its subcellular location is the mitochondrion. It functions in the pathway tRNA modification; 5-methoxycarbonylmethyl-2-thiouridine-tRNA biosynthesis. Functionally, plays a central role in 2-thiolation of mcm(5)S(2)U at tRNA wobble positions of tRNA(Lys), tRNA(Glu) and tRNA(Gln). Directly binds tRNAs and probably acts by catalyzing adenylation of tRNAs, an intermediate required for 2-thiolation. It is unclear whether it acts as a sulfurtransferase that transfers sulfur from thiocarboxylated URM1 onto the uridine of tRNAs at wobble position. Prior mcm(5) tRNA modification by the elongator complex is required for 2-thiolation. May also be involved in protein urmylation. May also be involved in protein urmylation and in invasive and pseudohyphal growth. This is Cytoplasmic tRNA 2-thiolation protein 1 from Saccharomyces cerevisiae (strain ATCC 204508 / S288c) (Baker's yeast).